Here is a 264-residue protein sequence, read N- to C-terminus: Acyl-[acyl-carrier-protein]--UDP-N-acetylglucosamine O-acyltransferase (264 aa).

The protein belongs to the transferase hexapeptide repeat family. LpxA subfamily. In terms of assembly, homotrimer.

The protein localises to the cytoplasm. It catalyses the reaction a (3R)-hydroxyacyl-[ACP] + UDP-N-acetyl-alpha-D-glucosamine = a UDP-3-O-[(3R)-3-hydroxyacyl]-N-acetyl-alpha-D-glucosamine + holo-[ACP]. It participates in glycolipid biosynthesis; lipid IV(A) biosynthesis; lipid IV(A) from (3R)-3-hydroxytetradecanoyl-[acyl-carrier-protein] and UDP-N-acetyl-alpha-D-glucosamine: step 1/6. Its function is as follows. Involved in the biosynthesis of lipid A, a phosphorylated glycolipid that anchors the lipopolysaccharide to the outer membrane of the cell. The protein is Acyl-[acyl-carrier-protein]--UDP-N-acetylglucosamine O-acyltransferase of Chlorobaculum parvum (strain DSM 263 / NCIMB 8327) (Chlorobium vibrioforme subsp. thiosulfatophilum).